A 120-amino-acid polypeptide reads, in one-letter code: Large ribosomal subunit protein bL19 (120 aa).

It belongs to the bacterial ribosomal protein bL19 family.

This protein is located at the 30S-50S ribosomal subunit interface and may play a role in the structure and function of the aminoacyl-tRNA binding site. The sequence is that of Large ribosomal subunit protein bL19 from Trichormus variabilis (strain ATCC 29413 / PCC 7937) (Anabaena variabilis).